Consider the following 110-residue polypeptide: Protein NATD1 (110 aa).

Positions 19-109 constitute an N-acetyltransferase domain; it reads EHDRQRRQFS…PLPQYLERLQ (91 aa).

The protein belongs to the NATD1 family. As to expression, expressed in the heart, testis, kidney and lung.

The protein is Protein NATD1 (Natd1) of Mus musculus (Mouse).